We begin with the raw amino-acid sequence, 66 residues long: Large ribosomal subunit protein bL32 (66 aa).

Residues 1–19 show a composition bias toward basic residues; sequence MAVPKRKMSRSNTRARRSQ. The tract at residues 1-20 is disordered; it reads MAVPKRKMSRSNTRARRSQW.

It belongs to the bacterial ribosomal protein bL32 family.

This Beutenbergia cavernae (strain ATCC BAA-8 / DSM 12333 / CCUG 43141 / JCM 11478 / NBRC 16432 / NCIMB 13614 / HKI 0122) protein is Large ribosomal subunit protein bL32.